The primary structure comprises 699 residues: Elongation factor G (699 aa).

Residues 10–292 enclose the tr-type G domain; it reads NRTRNIGIMA…AVIDYLPSPT (283 aa). GTP contacts are provided by residues 19–26, 90–94, and 144–147; these read AHIDAGKT, DTPGH, and NKMD. A disordered region spans residues 292–312; it reads TDVPAIRGEEDDGSEGSRSAS.

The protein belongs to the TRAFAC class translation factor GTPase superfamily. Classic translation factor GTPase family. EF-G/EF-2 subfamily.

It is found in the cytoplasm. In terms of biological role, catalyzes the GTP-dependent ribosomal translocation step during translation elongation. During this step, the ribosome changes from the pre-translocational (PRE) to the post-translocational (POST) state as the newly formed A-site-bound peptidyl-tRNA and P-site-bound deacylated tRNA move to the P and E sites, respectively. Catalyzes the coordinated movement of the two tRNA molecules, the mRNA and conformational changes in the ribosome. The sequence is that of Elongation factor G from Coxiella burnetii (strain CbuG_Q212) (Coxiella burnetii (strain Q212)).